A 140-amino-acid polypeptide reads, in one-letter code: MAKKEVAKIKLQIPAGAANPSPPVGPALGQHGLNIMAFCKEFNAKTMEQKGMITPVVITVYADRSFSFITKTPPASVLLIKAAKLEKGSGEPNRNKVGSVTMAQVEEIAALKMPDLTAKDLEAAKRNILGTARSMGIEVK.

This sequence belongs to the universal ribosomal protein uL11 family. In terms of assembly, part of the ribosomal stalk of the 50S ribosomal subunit. Interacts with L10 and the large rRNA to form the base of the stalk. L10 forms an elongated spine to which L12 dimers bind in a sequential fashion forming a multimeric L10(L12)X complex. Post-translationally, one or more lysine residues are methylated.

Forms part of the ribosomal stalk which helps the ribosome interact with GTP-bound translation factors. In Nitratidesulfovibrio vulgaris (strain ATCC 29579 / DSM 644 / CCUG 34227 / NCIMB 8303 / VKM B-1760 / Hildenborough) (Desulfovibrio vulgaris), this protein is Large ribosomal subunit protein uL11.